The chain runs to 332 residues: MQTGSTPHDDRAGVSANGILGAQARGASGRLLPEIWMQDGAKRVEEALARLLCAEDDGETELMAAMRYATLHGGKRTRALLCLAAGALADTPAHMLDDVGAAIEMMHACTLVHDDLPAMDDDVLRRGLPTVHVKFGEATAILVGDALQAHAFLTLASLNAPGDSPIALVRELAQAVSAEGAAGGQAIDLSLVGKHVELDRIVAMHRMKSGALVRASVRMGALCAVGVNAAHAALYCALDHYSACFGLALQVIDDILDVTADTAALGKTPGKDAAAQKPTCASIMGLQEARQFALDLLRDAGEAIAPLGPRAERLAQLIQRANAYLFKHAPRA.

Isopentenyl diphosphate contacts are provided by Lys-75, Arg-78, and His-107. Residues Asp-114 and Asp-120 each contribute to the Mg(2+) site. Residue Arg-125 coordinates (2E)-geranyl diphosphate. Arg-126 provides a ligand contact to isopentenyl diphosphate. Residues Lys-208, Ser-209, Gln-250, and Lys-267 each coordinate (2E)-geranyl diphosphate.

This sequence belongs to the FPP/GGPP synthase family. It depends on Mg(2+) as a cofactor.

The protein resides in the cytoplasm. It catalyses the reaction isopentenyl diphosphate + (2E)-geranyl diphosphate = (2E,6E)-farnesyl diphosphate + diphosphate. In Bradyrhizobium diazoefficiens (strain JCM 10833 / BCRC 13528 / IAM 13628 / NBRC 14792 / USDA 110), this protein is Probable farnesyl diphosphate synthase (fppS).